The following is a 357-amino-acid chain: 3-dehydroquinate synthase (357 aa).

Residues 69 to 74 (DGEKNK), 103 to 107 (GVIGD), 127 to 128 (TT), K140, and K149 each bind NAD(+). 3 residues coordinate Zn(2+): E182, H245, and H262.

The protein belongs to the sugar phosphate cyclases superfamily. Dehydroquinate synthase family. Co(2+) serves as cofactor. It depends on Zn(2+) as a cofactor. The cofactor is NAD(+).

The protein localises to the cytoplasm. The enzyme catalyses 7-phospho-2-dehydro-3-deoxy-D-arabino-heptonate = 3-dehydroquinate + phosphate. It participates in metabolic intermediate biosynthesis; chorismate biosynthesis; chorismate from D-erythrose 4-phosphate and phosphoenolpyruvate: step 2/7. Catalyzes the conversion of 3-deoxy-D-arabino-heptulosonate 7-phosphate (DAHP) to dehydroquinate (DHQ). The sequence is that of 3-dehydroquinate synthase from Shewanella denitrificans (strain OS217 / ATCC BAA-1090 / DSM 15013).